We begin with the raw amino-acid sequence, 86 residues long: DNA-directed RNA polymerase subunit Rpo6 (86 aa).

Belongs to the archaeal Rpo6/eukaryotic RPB6 RNA polymerase subunit family. In terms of assembly, part of the RNA polymerase complex.

The protein localises to the cytoplasm. The enzyme catalyses RNA(n) + a ribonucleoside 5'-triphosphate = RNA(n+1) + diphosphate. In terms of biological role, DNA-dependent RNA polymerase (RNAP) catalyzes the transcription of DNA into RNA using the four ribonucleoside triphosphates as substrates. This Sulfurisphaera tokodaii (strain DSM 16993 / JCM 10545 / NBRC 100140 / 7) (Sulfolobus tokodaii) protein is DNA-directed RNA polymerase subunit Rpo6.